A 611-amino-acid polypeptide reads, in one-letter code: MAADNTGSKSSSAADSYVGSLISLTSKSEIRYEGILYNINTDESSIGLQNVRSFGTEGRKKDGPQVPPSDKVYEYILFRGTDIKDLQVKASPPVQPPASTINNDPAIIQSHYPSPMPTSGSLPSTASGSLPDISSHNGQPGQHGMGFQNAMPLYQPGGNLGSWGASPQPPMYWQGFYTPPPNGLPQLHQQSLIRPPHGLPMPNSLQQPLQYPNFNTPPPPTGSSSLQGSSLPEAPSSLFPFSTSSQMLAPSSLPFPGLPPVTLSSSLQSTLQSAPSPSLASEMAPPLLSNKAPITAPPTLPQDTNLLSFSLSTTRATEASTGLPLSNKPSVVTGPISPPQTTPLTSAPVAGVSSSISQDKPKPLLVTPGQLLQSGSSAVSLSPPSTNADKDVEVVQVSSSAGLEQSVPVTSEAQPPILPLPSSARPTQKPNGHSFPNHNGYRGRGRGRGRGAGRSHQVMKFTEDFDFTAMNEKFNKDEVWGHLGKSTTLDGDEDDDSPTVDEAELPKIEAKPVYNKDDFFDSLSSNTIDRESQNSRPRFSEQRKLDTETFGEFSRFRGGRGGRGGYGRNNGYSRGGYGGRGYGGYGGRGGGGGGYGYGGRGQGRGVSNRTT.

Positions 9 to 92 (KSSSAADSYV…IKDLQVKASP (84 aa)) constitute a Sm domain. Disordered regions lie at residues 111-153 (HYPS…AMPL), 183-238 (GLPQ…PSSL), 264-301 (SSSL…PTLP), 318-362 (EAST…DKPK), 396-455 (QVSS…AGRS), and 519-611 (FFDS…NRTT). Composition is skewed to polar residues over residues 117–140 (PTSG…NGQP) and 203–214 (NSLQQPLQYPNF). Over residues 264–281 (SSSLQSTLQSAPSPSLAS) the composition is skewed to low complexity. 3 stretches are compositionally biased toward polar residues: residues 318-330 (EAST…NKPS), 396-413 (QVSS…TSEA), and 424-437 (ARPT…SFPN). Residues 441–453 (YRGRGRGRGRGAG) are compositionally biased toward basic residues. The region spanning 453–489 (GRSHQVMKFTEDFDFTAMNEKFNKDEVWGHLGKSTTL) is the DFDF domain. Positions 512–527 (PVYNKDDFFDSLSSNT) match the FFD box motif. Over residues 528-547 (IDRESQNSRPRFSEQRKLDT) the composition is skewed to basic and acidic residues. Positions 534-554 (NSRPRFSEQRKLDTETFGEFS) match the TFG box motif. Residues 559-604 (GRGGRGGYGRNNGYSRGGYGGRGYGGYGGRGGGGGGYGYGGRGQGR) show a composition bias toward gly residues.

It belongs to the LSM14 family. As to quaternary structure, homodimer. Component of the decapping complex. Interacts with DCP1 and DCP2.

The protein resides in the cytoplasm. Its subcellular location is the P-body. Functionally, as a component of the decapping complex, involved in the degradation of mRNAs. Promotes P-body formation. Translational repressor. In Arabidopsis thaliana (Mouse-ear cress), this protein is Protein decapping 5 (DCP5).